The primary structure comprises 95 residues: Large ribosomal subunit protein bL25 (95 aa).

This sequence belongs to the bacterial ribosomal protein bL25 family. Part of the 50S ribosomal subunit; part of the 5S rRNA/L5/L18/L25 subcomplex. Contacts the 5S rRNA. Binds to the 5S rRNA independently of L5 and L18.

In terms of biological role, this is one of the proteins that binds to the 5S RNA in the ribosome where it forms part of the central protuberance. This chain is Large ribosomal subunit protein bL25, found in Shewanella sediminis (strain HAW-EB3).